The sequence spans 56 residues: MTEREKIIQQQKQLKALFSVWMKEKMNHEVVIFQKTDGKIVEHYPDGSEKIVGYAK.

This is an uncharacterized protein from Haemophilus influenzae (strain ATCC 51907 / DSM 11121 / KW20 / Rd).